The primary structure comprises 247 residues: ATP synthase subunit a, chloroplastic (247 aa).

Transmembrane regions (helical) follow at residues Q38–V58, V95–L115, I134–S154, L199–L219, and G220–G240.

It belongs to the ATPase A chain family. As to quaternary structure, F-type ATPases have 2 components, CF(1) - the catalytic core - and CF(0) - the membrane proton channel. CF(1) has five subunits: alpha(3), beta(3), gamma(1), delta(1), epsilon(1). CF(0) has four main subunits: a, b, b' and c.

The protein resides in the plastid. It localises to the chloroplast thylakoid membrane. Key component of the proton channel; it plays a direct role in the translocation of protons across the membrane. This Hordeum vulgare (Barley) protein is ATP synthase subunit a, chloroplastic.